We begin with the raw amino-acid sequence, 1486 residues long: Phosphatidylinositol 3-kinase C2 domain-containing subunit gamma (1486 aa).

A PI3K-RBD domain is found at 285–371 (KTKFNIHIFI…IQLHLQKSRE (87 aa)). Positions 521-669 (LPSHLSFTVY…SPVTLQIDFP (149 aa)) constitute a C2 PI3K-type domain. The region spanning 684–860 (RSNLEEPLKE…QKLLAALQFC (177 aa)) is the PIK helical domain. Residues 929–1207 (DHDACSYFTS…KIKESLECFP (279 aa)) enclose the PI3K/PI4K catalytic domain. The segment at 935 to 941 (YFTSNAL) is G-loop. The tract at residues 1071 to 1079 (GVCDRHNDN) is catalytic loop. Positions 1090-1116 (HIDFGKFLGHAQTFGGIKRDRAPFIFT) are activation loop. One can recognise a PX domain in the interval 1240 to 1352 (LSTTRSIERA…SFFLSEAVQQ (113 aa)). A C2 domain is found at 1369 to 1486 (KKPKVQLVIS…KWYPLGNSII (118 aa)).

The protein belongs to the PI3/PI4-kinase family. Highly expressed in liver, prostate and testis. Lower levels in small intestine, kidney and pancreas.

It is found in the membrane. It carries out the reaction a 1,2-diacyl-sn-glycero-3-phospho-(1D-myo-inositol 4-phosphate) + ATP = a 1,2-diacyl-sn-glycero-3-phospho-(1D-myo-inositol-3,4-bisphosphate) + ADP + H(+). The catalysed reaction is a 1,2-diacyl-sn-glycero-3-phospho-(1D-myo-inositol) + ATP = a 1,2-diacyl-sn-glycero-3-phospho-(1D-myo-inositol-3-phosphate) + ADP + H(+). Functionally, generates phosphatidylinositol 3-phosphate (PtdIns3P) and phosphatidylinositol 3,4-bisphosphate (PtdIns(3,4)P2) that act as second messengers. May play a role in SDF1A-stimulated chemotaxis. This chain is Phosphatidylinositol 3-kinase C2 domain-containing subunit gamma (PIK3C2G), found in Homo sapiens (Human).